A 461-amino-acid polypeptide reads, in one-letter code: MVKRIEADNLFELTAELVSASSKLHKFLDQKNLPQPSFDAPAPSVALNSANKPYYDARSAIVEAAEQLIRLVRGPRDTLLALSFEHCATASMQVVFKYKFANHIPLHGSTTYSKIAEAVGDGVTTALVERTIQHCASFGLFETIPGAMLLQCYLVLLVTDPDLEAWMYLSAVIAYPAGAAIPKAVEQYGVSHEADESGYGASIGRKIAQFQRFREPDGKKDHEMFARAMRGIAAGGAYDFRHAVDGGYPWHLLAEGAGHLVVDVGGGPGHVAMALAEKYPSLRFQVQDLPETVQVGAKNCPEHLKSRVSFQSHDFFTSQPAHEVQDGEGIVYFARFILHDWSDKYATKIVQQLATGLRPQDRIILNEVVVPEAGQVGRETERRMHDRDLLMLMNLNGRERTQSAFEAIFASVTPKLRLQRVIHPEQGELSLIEVTLDGVELPAQANGVNGHANGTNGVNGH.

D288 serves as a coordination point for S-adenosyl-L-methionine. Catalysis depends on H339, which acts as the Proton acceptor.

Belongs to the class I-like SAM-binding methyltransferase superfamily. Cation-independent O-methyltransferase family. COMT subfamily.

It functions in the pathway mycotoxin biosynthesis. Its function is as follows. O-methyltransferase; part of the gene cluster that mediates the biosynthesis of cercosporin, a light-activated, non-host-selective toxin. The perylenequinone chromophore of cercosporin absorbs light energy to attain an electronically-activated triplet state and produces active oxygen species such as the hydroxyl radical, superoxide, hydrogen peroxide or singlet oxygen upon reaction with oxygen molecules. These reactive oxygen species cause damage to various cellular components including lipids, proteins and nucleic acids. The first step of cercosporin biosynthesis is performed by the polyketide synthase CTB1 which catalyzes the formation of nor-toralactone. The starter unit acyltransferase (SAT) domain of CTB1 initiates polyketide extension by the selective utilization of acetyl-CoA, which is elongated to the heptaketide in the beta-ketoacyl synthase (KS) domain by successive condensations with six malonyl units introduced by the malonyl acyltransferase (MAT) domain. The product template (PT) domain catalyzes C4-C9 and C2-C11 aldol cyclizations and dehydrations to a trihydroxynaphthalene, which is thought to be delivered to the thioesterase (TE) domain for product release. The bifunctional enzyme CTB3 then methylates nor-toralactone to toralactone before conducting an unusual oxidative aromatic ring opening. The O-methyltransferase CTB2 further methylates the nascent OH-6 of the CBT3 product, blocking further oxidation at this site before the reductase CTB6 reduces the 2-oxopropyl ketone at position C7, giving naphthalene. The FAD-dependent monooxygenase CTB5 in concert with the multicopper oxidase CTB12 are responsible for homodimerization of naphthalene with CTB7 installing the dioxepine moiety, finally producing cercosporin. The fasciclin domain-containing protein CTB11 might act with CTB5 and CTB12 whereas the roles of CTB9 and CTB10 have still to be elucidated. The chain is O-methyltransferase CTB2 from Cercospora nicotianae (Barn spot disease fungus).